We begin with the raw amino-acid sequence, 83 residues long: Molybdopterin synthase sulfur carrier subunit (83 aa).

G83 is subject to 1-thioglycine; alternate. A Glycyl adenylate; alternate modification is found at G83.

This sequence belongs to the MoaD family. MOCS2A subfamily. In terms of assembly, heterotetramer; composed of 2 small (MOCS2A) and 2 large (MOCS2B) subunits. C-terminal thiocarboxylation occurs in 2 steps, it is first acyl-adenylated (-COAMP) via the hesA/moeB/thiF part of MOCS3, then thiocarboxylated (-COSH) via the rhodanese domain of MOCS3.

The protein resides in the cytoplasm. The protein operates within cofactor biosynthesis; molybdopterin biosynthesis. Acts as a sulfur carrier required for molybdopterin biosynthesis. Component of the molybdopterin synthase complex that catalyzes the conversion of precursor Z into molybdopterin by mediating the incorporation of 2 sulfur atoms into precursor Z to generate a dithiolene group. In the complex, serves as sulfur donor by being thiocarboxylated (-COSH) at its C-terminus by MOCS3. After interaction with MOCS2B, the sulfur is then transferred to precursor Z to form molybdopterin. The polypeptide is Molybdopterin synthase sulfur carrier subunit (Chlamydomonas reinhardtii (Chlamydomonas smithii)).